A 242-amino-acid polypeptide reads, in one-letter code: Probable transcriptional regulatory protein XCC3027 (242 aa).

Belongs to the TACO1 family.

The protein resides in the cytoplasm. In Xanthomonas campestris pv. campestris (strain ATCC 33913 / DSM 3586 / NCPPB 528 / LMG 568 / P 25), this protein is Probable transcriptional regulatory protein XCC3027.